Reading from the N-terminus, the 224-residue chain is Small ribosomal subunit protein uS13 (224 aa).

The span at 1-17 (MSEKTDKTEKKQKKAEE) shows a compositional bias: basic and acidic residues. Disordered stretches follow at residues 1-64 (MSEK…AEEK) and 184-224 (HERG…EDKK). Composition is skewed to low complexity over residues 20–30 (ETASAEAAPAK) and 38–47 (AKPAEGAPAD). The segment covering 210 to 224 (KKGEQGGAAKKEDKK) has biased composition (basic and acidic residues).

It belongs to the universal ribosomal protein uS13 family. In terms of assembly, part of the 30S ribosomal subunit. Forms a loose heterodimer with protein S19. Forms two bridges to the 50S subunit in the 70S ribosome.

Functionally, located at the top of the head of the 30S subunit, it contacts several helices of the 16S rRNA. In the 70S ribosome it contacts the 23S rRNA (bridge B1a) and protein L5 of the 50S subunit (bridge B1b), connecting the 2 subunits; these bridges are implicated in subunit movement. This Methanocella arvoryzae (strain DSM 22066 / NBRC 105507 / MRE50) protein is Small ribosomal subunit protein uS13.